A 139-amino-acid polypeptide reads, in one-letter code: Small ribosomal subunit protein uS12 (139 aa).

The tract at residues 119-139 is disordered; that stretch reads GVDKRRQQRSAYGAKKPKPKS.

This sequence belongs to the universal ribosomal protein uS12 family. In terms of assembly, part of the 30S ribosomal subunit. Contacts proteins S8 and S17. May interact with IF1 in the 30S initiation complex.

Its function is as follows. With S4 and S5 plays an important role in translational accuracy. Functionally, interacts with and stabilizes bases of the 16S rRNA that are involved in tRNA selection in the A site and with the mRNA backbone. Located at the interface of the 30S and 50S subunits, it traverses the body of the 30S subunit contacting proteins on the other side and probably holding the rRNA structure together. The combined cluster of proteins S8, S12 and S17 appears to hold together the shoulder and platform of the 30S subunit. This chain is Small ribosomal subunit protein uS12, found in Mycoplasma genitalium (strain ATCC 33530 / DSM 19775 / NCTC 10195 / G37) (Mycoplasmoides genitalium).